The chain runs to 362 residues: Adenosine deaminase (362 aa).

2 residues coordinate Zn(2+): histidine 19 and histidine 21. Residues histidine 21, aspartate 23, and glycine 181 each coordinate substrate. Histidine 208 is a binding site for Zn(2+). Catalysis depends on glutamate 211, which acts as the Proton donor. Zn(2+) is bound at residue aspartate 300.

This sequence belongs to the metallo-dependent hydrolases superfamily. Adenosine and AMP deaminases family. Adenosine deaminase subfamily. Zn(2+) serves as cofactor.

The catalysed reaction is adenosine + H2O + H(+) = inosine + NH4(+). It catalyses the reaction 2'-deoxyadenosine + H2O + H(+) = 2'-deoxyinosine + NH4(+). Its function is as follows. Catalyzes the hydrolytic deamination of adenosine and 2-deoxyadenosine. This chain is Adenosine deaminase, found in Mycobacterium sp. (strain JLS).